Here is a 415-residue protein sequence, read N- to C-terminus: Serine hydroxymethyltransferase (415 aa).

(6S)-5,6,7,8-tetrahydrofolate is bound by residues Leu122 and 126 to 128; that span reads GHL. Position 230 is an N6-(pyridoxal phosphate)lysine (Lys230).

It belongs to the SHMT family. As to quaternary structure, homodimer. Pyridoxal 5'-phosphate serves as cofactor.

The protein localises to the cytoplasm. It catalyses the reaction (6R)-5,10-methylene-5,6,7,8-tetrahydrofolate + glycine + H2O = (6S)-5,6,7,8-tetrahydrofolate + L-serine. Its pathway is one-carbon metabolism; tetrahydrofolate interconversion. It participates in amino-acid biosynthesis; glycine biosynthesis; glycine from L-serine: step 1/1. Catalyzes the reversible interconversion of serine and glycine with tetrahydrofolate (THF) serving as the one-carbon carrier. This reaction serves as the major source of one-carbon groups required for the biosynthesis of purines, thymidylate, methionine, and other important biomolecules. Also exhibits THF-independent aldolase activity toward beta-hydroxyamino acids, producing glycine and aldehydes, via a retro-aldol mechanism. The protein is Serine hydroxymethyltransferase of Ralstonia pickettii (strain 12J).